The primary structure comprises 277 residues: Phosphate import ATP-binding protein PstB 2 (277 aa).

The region spanning 31-272 (IEVPGLNLFY…PAKKQTEDYI (242 aa)) is the ABC transporter domain. Residue 63-70 (GPSGCGKS) participates in ATP binding.

The protein belongs to the ABC transporter superfamily. Phosphate importer (TC 3.A.1.7) family. As to quaternary structure, the complex is composed of two ATP-binding proteins (PstB), two transmembrane proteins (PstC and PstA) and a solute-binding protein (PstS).

Its subcellular location is the cell inner membrane. The catalysed reaction is phosphate(out) + ATP + H2O = ADP + 2 phosphate(in) + H(+). Functionally, part of the ABC transporter complex PstSACB involved in phosphate import. Responsible for energy coupling to the transport system. This Pseudomonas syringae pv. syringae (strain B728a) protein is Phosphate import ATP-binding protein PstB 2.